The following is an 837-amino-acid chain: Cap-specific mRNA (nucleoside-2'-O-)-methyltransferase 1 (837 aa).

The disordered stretch occupies residues 1-66 (MKRRTDPECT…EGKQPCSDDF (66 aa)). The Bipartite nuclear localization signal signature appears at 2 to 18 (KRRTDPECTAPLKKQKR). Phosphoserine is present on residues Ser-27, Ser-30, and Ser-52. Basic and acidic residues predominate over residues 56–66 (TEGKQPCSDDF). Positions 86 to 132 (YNSVSQRLMAKMGFREGEGLGKYSQGRKDIVETSNQKGRRGLGLTLQ) constitute a G-patch domain. At Ser-90 the chain carries Phosphoserine. N6-acetyllysine is present on Lys-107. Residues 202-206 (KSVFD) and Arg-217 each bind substrate. The RrmJ-type SAM-dependent 2'-O-MTase domain occupies 230-449 (FFLNRAAMKM…ERYVVCKGLK (220 aa)). Asn-233 is a binding site for S-adenosyl-L-methionine. Lys-238 is an active-site residue. Residues 276-282 (CAGPGGF) and 334-335 (DI) contribute to the S-adenosyl-L-methionine site. The active site involves Asp-363. 373–375 (NLQ) provides a ligand contact to substrate. Lys-403 functions as the Proton acceptor in the catalytic mechanism. Residue Asn-438 participates in substrate binding. Positions 726 to 834 (SGGTPKLSYT…VLSFIQSHNP (109 aa)) are interaction with POLR2A. A WW domain is found at 751 to 785 (RTVNEPWTMGFSKSNNRKFFYNKKTQKSVYALPTE).

In terms of assembly, interacts with POLR2A (via C-terminus).

The protein localises to the nucleus. It carries out the reaction a 5'-end (N(7)-methyl 5'-triphosphoguanosine)-ribonucleoside in mRNA + S-adenosyl-L-methionine = a 5'-end (N(7)-methyl 5'-triphosphoguanosine)-(2'-O-methyl-ribonucleoside) in mRNA + S-adenosyl-L-homocysteine + H(+). Functionally, S-adenosyl-L-methionine-dependent methyltransferase that mediates mRNA cap1 2'-O-ribose methylation to the 5'-cap structure of mRNAs. Methylates the ribose of the first nucleotide of a m(7)GpppG-capped mRNA and small nuclear RNA (snRNA) to produce m(7)GpppRm (cap1). Displays a preference for cap0 transcripts. Cap1 modification is linked to higher levels of translation. May be involved in the interferon response pathway. This is Cap-specific mRNA (nucleoside-2'-O-)-methyltransferase 1 (Cmtr1) from Mus musculus (Mouse).